The primary structure comprises 311 residues: Probable manganese-dependent inorganic pyrophosphatase (311 aa).

Residues His-9, Asp-13, Asp-15, Asp-75, His-97, and Asp-149 each coordinate Mn(2+).

It belongs to the PPase class C family. Mn(2+) is required as a cofactor.

The protein localises to the cytoplasm. The enzyme catalyses diphosphate + H2O = 2 phosphate + H(+). The sequence is that of Probable manganese-dependent inorganic pyrophosphatase from Lactobacillus delbrueckii subsp. bulgaricus (strain ATCC BAA-365 / Lb-18).